The chain runs to 127 residues: Protein SPIRAL1-like 4 (127 aa).

The tract at residues 1–127 (MGKARGVNSG…FGSGPCGSDK (127 aa)) is disordered. Residues 39-48 (TTTTTTTTTT) are compositionally biased toward low complexity. The residue at position 80 (S80) is a Phosphoserine. The span at 80–94 (SPNNYYRSDGQNCGN) shows a compositional bias: polar residues.

It belongs to the SPIRAL1 family. Ubiquitous.

In terms of biological role, acts redundantly with SPR1 in maintaining the cortical microtubules organization essential for anisotropic cell growth. The polypeptide is Protein SPIRAL1-like 4 (SP1L4) (Arabidopsis thaliana (Mouse-ear cress)).